The following is a 1714-amino-acid chain: Latrophilin Cirl (1714 aa).

The Extracellular portion of the chain corresponds to 1-765; sequence MSSIDISGRY…LFTMFDGNMR (765 aa). In terms of domain architecture, SUEL-type lectin spans 26 to 115; sequence ACEGKKLTIE…KYLEAHYQCI (90 aa). Asparagine 143 is a glycosylation site (N-linked (GlcNAc...) asparagine). Residues 183 to 302 form a disordered region; that stretch reads PPHTVTHSTP…GSPASGNNSV (120 aa). A compositionally biased stretch (low complexity) spans 186 to 198; sequence TVTHSTPSSSTVP. Polar residues predominate over residues 244–262; sequence PSSKLPSAGNATAPSNTRI. N-linked (GlcNAc...) asparagine glycosylation occurs at asparagine 253. 2 stretches are compositionally biased toward low complexity: residues 272–282 and 290–301; these read DDGTLLTTKSS and ASNGSPASGNNS. N-linked (GlcNAc...) asparagine glycans are attached at residues asparagine 299, asparagine 338, asparagine 395, asparagine 652, asparagine 701, and asparagine 728. The segment at 373–397 is disordered; that stretch reads YDEYDDDPSSTTPAPSGGDCLHNSS. A GAIN-B domain is found at 558-752; that stretch reads RSVVQKVKNI…AILMDVVDEH (195 aa). Cystine bridges form between cysteine 707-cysteine 734 and cysteine 722-cysteine 736. The GPS stretch occupies residues 707–752; the sequence is CVFWNYIDHAWSANGCSLESTNRTHSVCSCNHLTNFAILMDVVDEH. A helical membrane pass occupies residues 766–786; it reads VFIYISIAICVVFIVIALLTL. Residues 787-799 lie on the Cytoplasmic side of the membrane; it reads KLFNGVFVKSART. The helical transmembrane segment at 800-820 threads the bilayer; sequence TIYTSIYVCLLAIELLFLLGI. The Extracellular segment spans residues 821–826; that stretch reads EQTETS. The chain crosses the membrane as a helical span at residues 827–847; sequence IFCGFITVFLHCAILSGAAWF. The Cytoplasmic segment spans residues 848–873; the sequence is CYEAFHSYYTLTSDELLVEVDQTPKV. A helical transmembrane segment spans residues 874–894; sequence NWYYLLSYGLSVSVVAISVAI. Over 895–911 the chain is Extracellular; it reads NPSTYTQNDYCVLMEAN. The helical transmembrane segment at 912–932 threads the bilayer; the sequence is ILFYATFVAPVLIFFVAAIGY. The Cytoplasmic segment spans residues 933–966; sequence TFLSWIIMCRKSCTGLKTKEHTRLASVRFDIRCS. The helical transmembrane segment at 967–987 threads the bilayer; sequence FVFLLLLSAVWCSAYFYLRGA. The Extracellular segment spans residues 988-994; that stretch reads KTDEDTT. Residues 995–1015 form a helical membrane-spanning segment; sequence TIYGYCFICFNTLLGLYIFVF. The Cytoplasmic portion of the chain corresponds to 1016–1714; that stretch reads HCIQNEKIRR…VRCYLEPLAK (699 aa). Phosphoserine occurs at positions 1155, 1245, and 1252. Disordered stretches follow at residues 1229-1253, 1268-1287, 1293-1354, 1447-1536, and 1551-1694; these read PNSQ…LHSR, KTKQ…LDPP, AFYQ…PPPH, GGGS…DERM, and FQRQ…QQRH. Residues 1296-1315 are compositionally biased toward low complexity; sequence QQQQQMRRQQQQQQQQQQQQ. Serine 1317 and serine 1318 each carry phosphoserine. Low complexity-rich tracts occupy residues 1330–1348 and 1453–1478; these read LHLQ…QQQL and GGSV…QQQR. Composition is skewed to acidic residues over residues 1486–1500 and 1510–1523; these read DDDD…DEAT and CDDD…DLDD. The segment covering 1524–1536 has biased composition (basic and acidic residues); sequence DAHKLPPQSDERM. Residues 1565-1580 are compositionally biased toward low complexity; it reads GALPPGVAPGAGSAGP. A compositionally biased stretch (polar residues) spans 1644 to 1659; the sequence is QTPAQKRQQLQKLSPQ. The segment covering 1660–1675 has biased composition (low complexity); that stretch reads STTSSSSHTSHSNLQP. Residues 1679–1693 are compositionally biased toward basic residues; that stretch reads PLTHQHPHPPQHQQR.

Belongs to the G-protein coupled receptor 2 family. LN-TM7 subfamily. Forms a heterodimer, consisting of a large extracellular region non-covalently linked to a seven-transmembrane moiety. In terms of processing, proteolytically cleaved into 2 subunits, an extracellular subunit and a seven-transmembrane subunit.

It is found in the cell membrane. The protein is Latrophilin Cirl of Drosophila ananassae (Fruit fly).